The following is a 255-amino-acid chain: Acetylglutamate kinase (255 aa).

Substrate-binding positions include 40 to 41 (GG), Arg62, and Asn153.

It belongs to the acetylglutamate kinase family. ArgB subfamily.

It is found in the cytoplasm. It carries out the reaction N-acetyl-L-glutamate + ATP = N-acetyl-L-glutamyl 5-phosphate + ADP. It functions in the pathway amino-acid biosynthesis; L-arginine biosynthesis; N(2)-acetyl-L-ornithine from L-glutamate: step 2/4. Catalyzes the ATP-dependent phosphorylation of N-acetyl-L-glutamate. The polypeptide is Acetylglutamate kinase (Bacillus cereus (strain ATCC 14579 / DSM 31 / CCUG 7414 / JCM 2152 / NBRC 15305 / NCIMB 9373 / NCTC 2599 / NRRL B-3711)).